The chain runs to 206 residues: Recombination protein RecR (206 aa).

A C4-type zinc finger spans residues 58-73 (CENCHNISDTKVCEIC). The 96-residue stretch at 81-176 (QTICVVEDIR…IISTIARGIS (96 aa)) folds into the Toprim domain.

Belongs to the RecR family.

Functionally, may play a role in DNA repair. It seems to be involved in an RecBC-independent recombinational process of DNA repair. It may act with RecF and RecO. The sequence is that of Recombination protein RecR from Flavobacterium johnsoniae (strain ATCC 17061 / DSM 2064 / JCM 8514 / BCRC 14874 / CCUG 350202 / NBRC 14942 / NCIMB 11054 / UW101) (Cytophaga johnsonae).